We begin with the raw amino-acid sequence, 873 residues long: Leucine--tRNA ligase (873 aa).

A 'HIGH' region motif is present at residues 42 to 52 (PYPSGKLHMGH). The segment at 624–643 (PVEIGGTEKMSKSKNNGVDP) is disordered. The short motif at 632–636 (KMSKS) is the 'KMSKS' region element. Lys-635 is a binding site for ATP.

Belongs to the class-I aminoacyl-tRNA synthetase family.

The protein resides in the cytoplasm. It carries out the reaction tRNA(Leu) + L-leucine + ATP = L-leucyl-tRNA(Leu) + AMP + diphosphate. The sequence is that of Leucine--tRNA ligase from Pseudomonas aeruginosa (strain ATCC 15692 / DSM 22644 / CIP 104116 / JCM 14847 / LMG 12228 / 1C / PRS 101 / PAO1).